Here is a 279-residue protein sequence, read N- to C-terminus: Coiled-coil domain-containing protein 106 (279 aa).

Residues 62-101 (KAQLHMALERNSWLQKRIEDLEEERDFLRCQLDKFISSAR) are a coiled coil. Over residues 109-121 (RMKPGPRRVDGDS) the composition is skewed to basic and acidic residues. Positions 109–173 (RMKPGPRRVD…FGKTKARERQ (65 aa)) are disordered. Residue Ser129 is modified to Phosphoserine. A Bipartite nuclear localization signal motif is present at residues 151 to 164 (KRQKQKGSTSRKRF). A compositionally biased stretch (basic residues) spans 151-167 (KRQKQKGSTSRKRFGKT).

As to quaternary structure, interacts with p53/TP53.

The protein localises to the nucleus. Promotes the degradation of p53/TP53 protein and inhibits its transactivity. In Mus musculus (Mouse), this protein is Coiled-coil domain-containing protein 106 (Ccdc106).